Here is a 350-residue protein sequence, read N- to C-terminus: S-adenosylmethionine:tRNA ribosyltransferase-isomerase (350 aa).

The protein belongs to the QueA family. In terms of assembly, monomer.

It localises to the cytoplasm. It catalyses the reaction 7-aminomethyl-7-carbaguanosine(34) in tRNA + S-adenosyl-L-methionine = epoxyqueuosine(34) in tRNA + adenine + L-methionine + 2 H(+). It participates in tRNA modification; tRNA-queuosine biosynthesis. Transfers and isomerizes the ribose moiety from AdoMet to the 7-aminomethyl group of 7-deazaguanine (preQ1-tRNA) to give epoxyqueuosine (oQ-tRNA). The chain is S-adenosylmethionine:tRNA ribosyltransferase-isomerase from Parvibaculum lavamentivorans (strain DS-1 / DSM 13023 / NCIMB 13966).